The following is a 161-amino-acid chain: SsrA-binding protein (161 aa).

This sequence belongs to the SmpB family.

It localises to the cytoplasm. In terms of biological role, required for rescue of stalled ribosomes mediated by trans-translation. Binds to transfer-messenger RNA (tmRNA), required for stable association of tmRNA with ribosomes. tmRNA and SmpB together mimic tRNA shape, replacing the anticodon stem-loop with SmpB. tmRNA is encoded by the ssrA gene; the 2 termini fold to resemble tRNA(Ala) and it encodes a 'tag peptide', a short internal open reading frame. During trans-translation Ala-aminoacylated tmRNA acts like a tRNA, entering the A-site of stalled ribosomes, displacing the stalled mRNA. The ribosome then switches to translate the ORF on the tmRNA; the nascent peptide is terminated with the 'tag peptide' encoded by the tmRNA and targeted for degradation. The ribosome is freed to recommence translation, which seems to be the essential function of trans-translation. This Desulforamulus reducens (strain ATCC BAA-1160 / DSM 100696 / MI-1) (Desulfotomaculum reducens) protein is SsrA-binding protein.